The following is a 380-amino-acid chain: MKVVHVVRQFHPSIGGMEEVVLNVARQHQATSADTVEVVTLDRVFTDPSGRLSAHDTHQGLPIRRIGYRGSSRYPLAPSVLDAIRSADVVHLHGIDFFYDYLALTKPLHGKPMVVSTHGGFFHTAYASCMKQLWFQTLTRISALAYARVIATSENDGDLFAEVVAPSRLRVIENGVDVQKYAGQGATTPGRTMLYFGRWSVNKGLIETLALLQAALKRDPQWRLIIAGREYDLNESDLRKAIAERGLQDKVQLSMSPSQEQLRALMQQAQFFVCLSRHEGFGIAAVEAMSAGLIPILSDIPPFVRLASESGQGVIVNRDKIEAAADQVQALALHADNDFDTRRTASMAYVSRYDWKHVVGRYIDEYHDALGIPRVQEAVR.

This sequence belongs to the glycosyltransferase group 1 family. Glycosyltransferase 4 subfamily.

It carries out the reaction beta-D-Glc-(1-&gt;4)-alpha-D-Glc-di-trans,octa-cis-undecaprenyl diphosphate + GDP-alpha-D-mannose = alpha-D-Man-(1-&gt;3)-beta-D-Glc-(1-&gt;4)-alpha-D-Glc-1-di-trans,octa-cis-undecaprenyl diphosphate + GDP + H(+). Functionally, involved in the biosynthesis of the exopolysaccharide xanthan, a polymer that is comprised of repeating pentasaccharide units with the structure of a beta-(1,4)-linked D-glucose backbone with trisaccharide side chains composed of mannose-beta-(1,4)-glucuronic acid-beta-(1,2)-mannose attached to alternate glucose residues in the backbone by alpha-(1,3) linkages. Xanthan is involved in pathogenicity but has also been used in a variety of applications as a specialty polymer for commercial applications, including food additives, where they act as viscosifying, stabilizing, emulsifying, or gelling agents. The sequence is that of GDP-mannose:cellobiosyl-diphosphopolyprenol alpha-mannosyltransferase (gumH) from Xanthomonas oryzae pv. oryzae (strain PXO99A).